Consider the following 619-residue polypeptide: MSERQSKYFDYQGIVISSTGQDNQDSETDLVYLIQAHGKAAPKNIMYGVSKCAFVPTNLERNFDNIEEAKNLERRSKIPLKFGEVILWNESDCDHDKRIILHIKREKPIYEASSSRNGLILKVGGVIQPTSTTSFWTPLCTVTMPETEATRAEPDVWLYAWIRFETTMKSGLDPFNMTATFESFDSCDPSDQARVCEAPWNAGSPDSKFGVWRPDPKPADSDDEIDIEPREGWHLPEDKWAEVIKMQLGLYVGERLLICKELSQFDFIIPLQKPFSRGTDKTLIYPAVGEYFHFSAIWSMQHNGFLIYELQPVPLLRQHVTSVNGNLLTRVVPASIRGLFVDKEGTLGLIDDPHHLLSFFEFHPAGYEFLKAMAEVRAVRTSENKSVRYRIVRTSGMSIFENWLRDTQFVVGPVKGIRINEDTVICAKHPNVYFKIPNNLKEGIPIGGGVQFVGKRQAGVDSEIMITECSPCPAFTCKNYSVSGDTRLFQVYLKPNCDHEQLAESDSMGFVDFRELETPCRGKFLAWVRESITVNDCRRAATIMEVCSTAICPPLIAMSANSSRATSARTTPAGSSIGSRSSIQSRASAATSVSSNRFVGPSSRRTPSGTPQSSTSSRV.

Positions 62-101 are required for prg-1 binding; that stretch reads NFDNIEEAKNLERRSKIPLKFGEVILWNESDCDHDKRIIL. 2 stretches are compositionally biased toward low complexity: residues 563–592 and 600–619; these read SRAT…AATS and GPSS…SSRV. A disordered region spans residues 563–619; that stretch reads SRATSARTTPAGSSIGSRSSIQSRASAATSVSSNRFVGPSSRRTPSGTPQSSTSSRV.

In terms of assembly, interacts (via N-terminus) with prg-1; the interaction is direct. May interact with edg-1. Expressed in germ cells.

It localises to the cytoplasmic granule. The protein localises to the cytoplasm. The protein resides in the perinuclear region. Component of P-granules which is required for P-granule formation and integrity in adult germ cells. Promotes the accumulation of glh-1 mRNA and localization of pgl-1 to P-granules. Involved in RNA-mediated gene silencing (RNAi) in the germline. In particular, it is required for piwi-interacting RNA (piRNA) gene silencing and positively regulates the formation of secondary 22G-RNAs, which are RNA-dependent RNA polymerase-derived endo-siRNAs, typically 22 nucleotides in length with a 5'guanosine residue. Its role in RNAi may also be through positively regulating the expression of the dsRNA-binding protein rde-4. Plays a role in small RNA-directed transgenerational epigenetic inheritance. The polypeptide is P-granule-associated protein deps-1 (Caenorhabditis elegans).